A 98-amino-acid polypeptide reads, in one-letter code: (4S)-4-hydroxy-5-phosphonooxypentane-2,3-dione isomerase (98 aa).

The 90-residue stretch at 2-91 folds into the ABM domain; sequence NVTLVEINIK…MSQPRQKRSF (90 aa).

This sequence belongs to the LsrG family. Homodimer.

The protein resides in the cytoplasm. The catalysed reaction is (2S)-2-hydroxy-3,4-dioxopentyl phosphate = 3-hydroxy-2,4-dioxopentyl phosphate. Involved in the degradation of phospho-AI-2, thereby terminating induction of the lsr operon and closing the AI-2 signaling cycle. Catalyzes the conversion of (4S)-4-hydroxy-5-phosphonooxypentane-2,3-dione (P-DPD) to 3-hydroxy-5-phosphonooxypentane-2,4-dione (P-HPD). The sequence is that of (4S)-4-hydroxy-5-phosphonooxypentane-2,3-dione isomerase from Klebsiella pneumoniae subsp. pneumoniae (strain ATCC 700721 / MGH 78578).